The primary structure comprises 259 residues: tRNA pseudouridine synthase A (259 aa).

Catalysis depends on Asp-52, which acts as the Nucleophile. Position 110 (Tyr-110) interacts with substrate.

It belongs to the tRNA pseudouridine synthase TruA family. Homodimer.

The enzyme catalyses uridine(38/39/40) in tRNA = pseudouridine(38/39/40) in tRNA. Formation of pseudouridine at positions 38, 39 and 40 in the anticodon stem and loop of transfer RNAs. The chain is tRNA pseudouridine synthase A from Coprothermobacter proteolyticus (strain ATCC 35245 / DSM 5265 / OCM 4 / BT).